A 53-amino-acid chain; its full sequence is Reg12l (53 aa).

Positions 1–34 (RVLFRSGDQPADQPAERMQDISPEQNPLFHPDKR) are excised as a propeptide. 3 disulfides stabilise this stretch: C36-C50, C37-C48, and C42-C51.

It belongs to the conotoxin M superfamily. Expressed by the venom duct.

The protein localises to the secreted. This Conus regius (Crown cone) protein is Reg12l.